The following is a 180-amino-acid chain: Large ribosomal subunit protein uL5 (180 aa).

Belongs to the universal ribosomal protein uL5 family. As to quaternary structure, part of the 50S ribosomal subunit; part of the 5S rRNA/L5/L18/L25 subcomplex. Contacts the 5S rRNA and the P site tRNA. Forms a bridge to the 30S subunit in the 70S ribosome.

Functionally, this is one of the proteins that bind and probably mediate the attachment of the 5S RNA into the large ribosomal subunit, where it forms part of the central protuberance. In the 70S ribosome it contacts protein S13 of the 30S subunit (bridge B1b), connecting the 2 subunits; this bridge is implicated in subunit movement. Contacts the P site tRNA; the 5S rRNA and some of its associated proteins might help stabilize positioning of ribosome-bound tRNAs. This Polynucleobacter asymbioticus (strain DSM 18221 / CIP 109841 / QLW-P1DMWA-1) (Polynucleobacter necessarius subsp. asymbioticus) protein is Large ribosomal subunit protein uL5.